The following is a 190-amino-acid chain: Spermatogenesis-associated protein 12 (190 aa).

As to expression, expressed in testis.

In Homo sapiens (Human), this protein is Spermatogenesis-associated protein 12 (SPATA12).